A 243-amino-acid chain; its full sequence is MFPPAMAGYDRAITIFSPEGKIYQVEYAGEAVKRGWPTVGVKCKAGVVLTAEKRKISALFDSSSLEKIYLIDEHVAASPSGLLADARILIDYARDVALSHRFIYDEPIDVEFLTKAVCNLKQQYTQFGGARPFGVALLIAGVDRHGARLYQTDPSGVYIGYFATAIGAESGTITEFLEKNYKFDMEMGECIELALKALASAVEITDSANVEVAYATIEEKKMRKMSQDEVASLLTKLGLLKKS.

The protein belongs to the peptidase T1A family. In terms of assembly, the 20S proteasome core is composed of 14 alpha and 14 beta subunits that assemble into four stacked heptameric rings, resulting in a barrel-shaped structure. The two inner rings, each composed of seven catalytic beta subunits, are sandwiched by two outer rings, each composed of seven alpha subunits. The catalytic chamber with the active sites is on the inside of the barrel. Has a gated structure, the ends of the cylinder being occluded by the N-termini of the alpha-subunits. Is capped at one or both ends by the proteasome regulatory ATPase, PAN.

The protein resides in the cytoplasm. The formation of the proteasomal ATPase PAN-20S proteasome complex, via the docking of the C-termini of PAN into the intersubunit pockets in the alpha-rings, triggers opening of the gate for substrate entry. Interconversion between the open-gate and close-gate conformations leads to a dynamic regulation of the 20S proteasome proteolysis activity. Functionally, component of the proteasome core, a large protease complex with broad specificity involved in protein degradation. The polypeptide is Proteasome subunit alpha (Pyrobaculum aerophilum (strain ATCC 51768 / DSM 7523 / JCM 9630 / CIP 104966 / NBRC 100827 / IM2)).